A 178-amino-acid polypeptide reads, in one-letter code: Large ribosomal subunit protein bL17 (178 aa).

Composition is skewed to low complexity over residues K123–T139 and E151–A160. Positions K123–A178 are disordered. The span at D161–A178 shows a compositional bias: basic and acidic residues.

It belongs to the bacterial ribosomal protein bL17 family. Part of the 50S ribosomal subunit. Contacts protein L32.

This chain is Large ribosomal subunit protein bL17, found in Cutibacterium acnes (strain DSM 16379 / KPA171202) (Propionibacterium acnes).